The sequence spans 254 residues: Phosphoribosylaminoimidazole-succinocarboxamide synthase (254 aa).

The protein belongs to the SAICAR synthetase family.

It carries out the reaction 5-amino-1-(5-phospho-D-ribosyl)imidazole-4-carboxylate + L-aspartate + ATP = (2S)-2-[5-amino-1-(5-phospho-beta-D-ribosyl)imidazole-4-carboxamido]succinate + ADP + phosphate + 2 H(+). The protein operates within purine metabolism; IMP biosynthesis via de novo pathway; 5-amino-1-(5-phospho-D-ribosyl)imidazole-4-carboxamide from 5-amino-1-(5-phospho-D-ribosyl)imidazole-4-carboxylate: step 1/2. This Bartonella quintana (strain Toulouse) (Rochalimaea quintana) protein is Phosphoribosylaminoimidazole-succinocarboxamide synthase.